The sequence spans 546 residues: Protein HydE (546 aa).

The protein is Protein HydE (hydE) of Wolinella succinogenes (strain ATCC 29543 / DSM 1740 / CCUG 13145 / JCM 31913 / LMG 7466 / NCTC 11488 / FDC 602W) (Vibrio succinogenes).